Reading from the N-terminus, the 1097-residue chain is DNA-directed RNA polymerase subunit beta (1097 aa).

Positions 1071–1097 (MQDVNPKRNTPSRPTYESLGTSEYAED) are disordered. Residues 1077 to 1091 (KRNTPSRPTYESLGT) are compositionally biased toward polar residues.

The protein belongs to the RNA polymerase beta chain family. In terms of assembly, in cyanobacteria the RNAP catalytic core is composed of 2 alpha, 1 beta, 1 beta', 1 gamma and 1 omega subunit. When a sigma factor is associated with the core the holoenzyme is formed, which can initiate transcription.

It catalyses the reaction RNA(n) + a ribonucleoside 5'-triphosphate = RNA(n+1) + diphosphate. Functionally, DNA-dependent RNA polymerase catalyzes the transcription of DNA into RNA using the four ribonucleoside triphosphates as substrates. This is DNA-directed RNA polymerase subunit beta from Prochlorococcus marinus subsp. pastoris (strain CCMP1986 / NIES-2087 / MED4).